We begin with the raw amino-acid sequence, 299 residues long: N-acetylneuraminate lyase (299 aa).

Aceneuramate contacts are provided by S45 and S46. Catalysis depends on Y134, which acts as the Proton donor. Catalysis depends on K161, which acts as the Schiff-base intermediate with substrate. T163, G185, D187, and E188 together coordinate aceneuramate.

The protein belongs to the DapA family. NanA subfamily. As to quaternary structure, homotetramer.

It localises to the cytoplasm. The enzyme catalyses aceneuramate = aldehydo-N-acetyl-D-mannosamine + pyruvate. It participates in amino-sugar metabolism; N-acetylneuraminate degradation; D-fructose 6-phosphate from N-acetylneuraminate: step 1/5. Its function is as follows. Catalyzes the reversible aldol cleavage of N-acetylneuraminic acid (sialic acid; Neu5Ac) to form pyruvate and N-acetylmannosamine (ManNAc) via a Schiff base intermediate. This chain is N-acetylneuraminate lyase, found in Rhizobium meliloti (strain 1021) (Ensifer meliloti).